Here is a 247-residue protein sequence, read N- to C-terminus: Chaperone protein NfaE (247 aa).

The first 29 residues, 1–29, serve as a signal peptide directing secretion; that stretch reads MKMRAVAVFTGMLTGVLSVTGLLSAGAYA. The tract at residues 106–125 is disordered; sequence GQQSSRRRSVSTGGEFPSDR.

The protein belongs to the periplasmic pilus chaperone family.

It localises to the periplasm. Functionally, involved in the biogenesis of the NFA-I adhesin. This is Chaperone protein NfaE (nfaE) from Escherichia coli.